The primary structure comprises 153 residues: Regulator of ribonuclease activity B (153 aa).

Residues 114–153 are disordered; that stretch reads DPNADDDEYGDDGEFLDDEDEYGDDGEFFDDEDEEEPRVH. Positions 115–153 are enriched in acidic residues; it reads PNADDDEYGDDGEFLDDEDEYGDDGEFFDDEDEEEPRVH.

This sequence belongs to the RraB family. In terms of assembly, interacts with the C-terminal region of Rne.

The protein localises to the cytoplasm. Functionally, globally modulates RNA abundance by binding to RNase E (Rne) and regulating its endonucleolytic activity. Can modulate Rne action in a substrate-dependent manner by altering the composition of the degradosome. This is Regulator of ribonuclease activity B from Haemophilus influenzae (strain ATCC 51907 / DSM 11121 / KW20 / Rd).